A 191-amino-acid chain; its full sequence is Retinin (191 aa).

The N-terminal stretch at 1 to 21 (MSRLFLPVLAIVLVSIGASHT) is a signal peptide. Positions 52-88 (LADGSSGSVSSSAAQPEDQSQEEAEEQQVSSASSGSA) are disordered. Composition is skewed to low complexity over residues 55–69 (GSSG…QPED) and 78–88 (QQVSSASSGSA).

In terms of processing, phosphorylated. Specifically expressed in cornea (at protein level). Detected in retina and cortex.

The protein resides in the secreted. This chain is Retinin, found in Drosophila melanogaster (Fruit fly).